The following is a 776-amino-acid chain: Intermediate filament protein ifp-1 (776 aa).

The segment at 1-23 (MDSANARDCLLHLARAKLSERQD) is head. Positions 20–371 (ERQDLVQLND…ELLDRSGDPR (352 aa)) constitute an IF rod domain. The tract at residues 24–55 (LVQLNDQFVDIIEHVHYMEAEHTALEHDYNLL) is coil 1A. The tract at residues 56–69 (KSGVQSDSSGINEI) is linker 1. Residues 70-207 (YNVEIRTVRS…EDNKKIIMNE (138 aa)) form a coil 1B region. The segment at 208 to 224 (HKYFVRDRNADRHVFRD) is linker 12. Residues 225-620 (QLRKAIADIR…QRGPHHSSYH (396 aa)) are coil 2. 2 disordered regions span residues 453 to 473 (ASPI…DSRS) and 518 to 544 (NTTQ…SERR). The span at 518-536 (NTTQINNPYASRTPTSSVN) shows a compositional bias: polar residues. The tract at residues 621–768 (AATGSVSNSI…WFVYTSNTEI (148 aa)) is tail. Residues 653–764 (NFQRFTRWYK…EVKSWFVYTS (112 aa)) enclose the LTD domain.

Belongs to the intermediate filament family.

The protein localises to the cytoplasm. In terms of biological role, cytoplasmic intermediate filaments provide mechanical strength to cells. Not essential protein. The sequence is that of Intermediate filament protein ifp-1 (ifp-1) from Caenorhabditis elegans.